An 805-amino-acid chain; its full sequence is Cell division cycle 5-related protein (805 aa).

HTH myb-type domains follow at residues 1-58 (MPRI…DPSI) and 59-108 (KKTE…DQAQ). 2 DNA-binding regions (H-T-H motif) span residues 31 to 54 (WSRIASLLHRKSAKQCKARWYEWL) and 82 to 104 (WRTIAPLIGRTAAQCLERYEYLL). Over residues 108-127 (QAKEGDKDEGDDPRKLRPGE) the composition is skewed to basic and acidic residues. Disordered stretches follow at residues 108–143 (QAKEGDKDEGDDPRKLRPGEIDPNPETKPARPDPID), 246–293 (HLEG…HVKK), 409–442 (LSTPYRTPGEGSGSTPRQGMTPRGAIGTPSQRSV), and 530–556 (LERRRRSQAVQRELPRPSNVNTSVLRP). A coiled-coil region spans residues 142–193 (IDMDEDELEMLSEARARLANTQGKKAKRKAREKQLEEARRLAALQKRRELRA). Residues 246–274 (HLEGKMRDEIEQQERKKDKERMKKKKESD) show a composition bias toward basic and acidic residues. 2 coiled-coil regions span residues 511 to 542 (EDAADIDERALALRAKQEELERRRRSQAVQRE) and 678 to 804 (YTRA…SKLQ).

The protein belongs to the CEF1 family. As to quaternary structure, component of the precatalytic, catalytic and postcatalytic spliceosome complexes.

It is found in the nucleus. It localises to the cytoplasm. In terms of biological role, DNA-binding protein involved in cell cycle control. May act as a transcription activator. Plays a role in pre-mRNA splicing as core component of precatalytic, catalytic and postcatalytic spliceosomal complexes. May also play a role in the response to DNA damage (DDR). The sequence is that of Cell division cycle 5-related protein (cdc5l) from Nematostella vectensis (Starlet sea anemone).